The sequence spans 155 residues: NADH-ubiquinone oxidoreductase chain 6 (155 aa).

Helical transmembrane passes span 10–30 (ILAI…VLFV), 43–63 (LMGI…FLFI), 75–95 (GTIH…LDLS), and 133–153 (AIPM…AIAI).

It belongs to the complex I subunit 6 family.

It localises to the mitochondrion membrane. It carries out the reaction a ubiquinone + NADH + 5 H(+)(in) = a ubiquinol + NAD(+) + 4 H(+)(out). In terms of biological role, core subunit of the mitochondrial membrane respiratory chain NADH dehydrogenase (Complex I) that is believed to belong to the minimal assembly required for catalysis. Complex I functions in the transfer of electrons from NADH to the respiratory chain. The immediate electron acceptor for the enzyme is believed to be ubiquinone. The protein is NADH-ubiquinone oxidoreductase chain 6 (ND6) of Candida parapsilosis (Yeast).